The chain runs to 145 residues: D-aminoacyl-tRNA deacylase (145 aa).

The Gly-cisPro motif, important for rejection of L-amino acids motif lies at 137 to 138 (GP).

Belongs to the DTD family. Homodimer.

The protein localises to the cytoplasm. The enzyme catalyses glycyl-tRNA(Ala) + H2O = tRNA(Ala) + glycine + H(+). It carries out the reaction a D-aminoacyl-tRNA + H2O = a tRNA + a D-alpha-amino acid + H(+). In terms of biological role, an aminoacyl-tRNA editing enzyme that deacylates mischarged D-aminoacyl-tRNAs. Also deacylates mischarged glycyl-tRNA(Ala), protecting cells against glycine mischarging by AlaRS. Acts via tRNA-based rather than protein-based catalysis; rejects L-amino acids rather than detecting D-amino acids in the active site. By recycling D-aminoacyl-tRNA to D-amino acids and free tRNA molecules, this enzyme counteracts the toxicity associated with the formation of D-aminoacyl-tRNA entities in vivo and helps enforce protein L-homochirality. The protein is D-aminoacyl-tRNA deacylase of Shewanella pealeana (strain ATCC 700345 / ANG-SQ1).